The primary structure comprises 357 residues: S-adenosylmethionine:tRNA ribosyltransferase-isomerase (357 aa).

The protein belongs to the QueA family. As to quaternary structure, monomer.

It is found in the cytoplasm. It carries out the reaction 7-aminomethyl-7-carbaguanosine(34) in tRNA + S-adenosyl-L-methionine = epoxyqueuosine(34) in tRNA + adenine + L-methionine + 2 H(+). It functions in the pathway tRNA modification; tRNA-queuosine biosynthesis. Transfers and isomerizes the ribose moiety from AdoMet to the 7-aminomethyl group of 7-deazaguanine (preQ1-tRNA) to give epoxyqueuosine (oQ-tRNA). The protein is S-adenosylmethionine:tRNA ribosyltransferase-isomerase of Edwardsiella ictaluri (strain 93-146).